Consider the following 309-residue polypeptide: Methionyl-tRNA formyltransferase (309 aa).

(6S)-5,6,7,8-tetrahydrofolate is bound at residue 112 to 115 (SLLP).

Belongs to the Fmt family.

The enzyme catalyses L-methionyl-tRNA(fMet) + (6R)-10-formyltetrahydrofolate = N-formyl-L-methionyl-tRNA(fMet) + (6S)-5,6,7,8-tetrahydrofolate + H(+). In terms of biological role, attaches a formyl group to the free amino group of methionyl-tRNA(fMet). The formyl group appears to play a dual role in the initiator identity of N-formylmethionyl-tRNA by promoting its recognition by IF2 and preventing the misappropriation of this tRNA by the elongation apparatus. This Bartonella bacilliformis (strain ATCC 35685 / KC583 / Herrer 020/F12,63) protein is Methionyl-tRNA formyltransferase.